The primary structure comprises 66 residues: Large ribosomal subunit protein bL31 (66 aa).

Residues cysteine 16, cysteine 18, cysteine 36, and cysteine 39 each coordinate Zn(2+).

The protein belongs to the bacterial ribosomal protein bL31 family. Type A subfamily. Part of the 50S ribosomal subunit during exponential growth. Requires Zn(2+) as cofactor.

Its function is as follows. Binds the 23S rRNA. Functionally, while neither of the L31 paralogs is essential, this protein seems to function as the main L31 protein. Has a lower affinity for 70S ribosomes than the non-zinc-containing paralog L31B (ytiA); is displaced by it to varying extents, even under zinc-replete conditions. In Bacillus subtilis (strain 168), this protein is Large ribosomal subunit protein bL31 (rpmE).